A 411-amino-acid polypeptide reads, in one-letter code: Heparan-sulfate 6-O-sulfotransferase 1 (411 aa).

The Cytoplasmic portion of the chain corresponds to 1 to 19 (MRRRRAGGRTMVERASKFV). A helical; Signal-anchor for type II membrane protein membrane pass occupies residues 20–37 (LVVAGSACFMLILYQYAG). The Lumenal portion of the chain corresponds to 38–411 (PGLSLGAPGG…DYMSHIIEKW (374 aa)). 3'-phosphoadenylyl sulfate is bound at residue 93–101 (HIQKTGGTT). Residues 123–124 (KK), Arg140, Trp145, and His150 contribute to the substrate site. The active-site Proton acceptor is the His150. Residues Arg185 and Ser193 each contribute to the 3'-phosphoadenylyl sulfate site. Residues His197 and Trp204 each coordinate substrate. The N-linked (GlcNAc...) asparagine glycan is linked to Asn264. 317–319 (MQY) contributes to the 3'-phosphoadenylyl sulfate binding site. Residue Asn320 is glycosylated (N-linked (GlcNAc...) asparagine). Residue 323 to 324 (RA) coordinates 3'-phosphoadenylyl sulfate. A coiled-coil region spans residues 352-386 (KDLFQQRYQYKRQLERREQRLRNREERLLHRSKEA). The tract at residues 380 to 401 (LHRSKEALPREDPEEPGRVPTE) is disordered.

This sequence belongs to the sulfotransferase 6 family. In terms of processing, N-glycosylated. In terms of tissue distribution, expressed in fetal brain and liver.

It localises to the membrane. It carries out the reaction alpha-D-glucosaminyl-[heparan sulfate](n) + 3'-phosphoadenylyl sulfate = 6-sulfo-alpha-D-glucosaminyl-[heparan sulfate](n) + adenosine 3',5'-bisphosphate + H(+). In terms of biological role, 6-O-sulfation enzyme which catalyzes the transfer of sulfate from 3'-phosphoadenosine 5'-phosphosulfate (PAPS) to position 6 of the N-sulfoglucosamine residue (GlcNS) of heparan sulfate. Critical for normal neuronal development where it may play a role in neuron branching. May also play a role in limb development. May prefer iduronic acid. The protein is Heparan-sulfate 6-O-sulfotransferase 1 of Mus musculus (Mouse).